The chain runs to 115 residues: MNLVIALLINTGLATILVMVAFWLPQLYTYLEKSSPYECGFDPLGSARLPFSMKFFLVAITFLLFDLEIAILLPIPWASQTSSPYSLLSLSGVLLALLTLGLAYEWLQKGLEWTE.

A run of 3 helical transmembrane segments spans residues 3–23 (LVIA…VAFW), 55–75 (FFLV…LLPI), and 87–107 (LLSL…YEWL).

The protein belongs to the complex I subunit 3 family. As to quaternary structure, core subunit of respiratory chain NADH dehydrogenase (Complex I) which is composed of 45 different subunits. Interacts with TMEM186. Interacts with TMEM242.

Its subcellular location is the mitochondrion inner membrane. The enzyme catalyses a ubiquinone + NADH + 5 H(+)(in) = a ubiquinol + NAD(+) + 4 H(+)(out). Functionally, core subunit of the mitochondrial membrane respiratory chain NADH dehydrogenase (Complex I) which catalyzes electron transfer from NADH through the respiratory chain, using ubiquinone as an electron acceptor. Essential for the catalytic activity of complex I. The polypeptide is NADH-ubiquinone oxidoreductase chain 3 (Ornithorhynchus anatinus (Duckbill platypus)).